The primary structure comprises 99 residues: uncharacterized protein (99 aa).

This is an uncharacterized protein from Vibrio alginolyticus.